The following is a 300-amino-acid chain: Probable alpha-L-glutamate ligase (300 aa).

Residues 104 to 287 (LQLLARQGID…IAGKMISWIE (184 aa)) enclose the ATP-grasp domain. Residues K141, 178 to 179 (EY), D187, and 211 to 213 (RSN) each bind ATP. Mg(2+) contacts are provided by D248, E260, and N262. Mn(2+)-binding residues include D248, E260, and N262.

Belongs to the RimK family. Requires Mg(2+) as cofactor. Mn(2+) is required as a cofactor.

This chain is Probable alpha-L-glutamate ligase, found in Enterobacter sp. (strain 638).